The primary structure comprises 188 residues: Large ribosomal subunit protein eL18 (188 aa).

Residues 143-188 (RSAREAEKHFGPAPGVPHSHTKPHVRSKGRKFERARGRRASRAYKN) are disordered. Composition is skewed to basic residues over residues 161-171 (SHTKPHVRSKG) and 178-188 (RGRRASRAYKN).

Belongs to the eukaryotic ribosomal protein eL18 family.

It localises to the cytoplasm. The protein is Large ribosomal subunit protein eL18 (rpl-18) of Caenorhabditis briggsae.